The sequence spans 195 residues: Transcription factor 15 (195 aa).

The interval 44 to 65 (LEAARRGPGPGSGRRASNGAGP) is disordered. The segment covering 56-65 (GRRASNGAGP) has biased composition (low complexity). Serine 60 bears the Phosphoserine mark. Residues 70–122 (RQRQAANARERDRTQSVNTAFTALRTLIPTEPVDRKLSKIETLRLASSYIAHL) form the bHLH domain.

In terms of assembly, heterodimer; efficient DNA binding requires dimerization with another bHLH protein, such as TCF3/E12. Interacts with MEOX2. As to expression, expressed in heart and skeletal muscle. Specifically expressed in a subpopulation of embryonic stem cells (ESCs), that are still undifferentiated but primed for ifferentiation. Expressed in hematopoietic stem cells (HSCs).

It localises to the nucleus. Its function is as follows. Early transcription factor that plays a key role in somitogenesis, paraxial mesoderm development and regulation of stem cell pluripotency. Essential for the mesenchymal to epithelial transition associated with somite formation. Required for somite morphogenesis, thereby regulating patterning of the axial skeleton and skeletal muscles. Required for proper localization of somite epithelium markers during the mesenchymal to epithelial transition. Also plays a key role in regulation of stem cell pluripotency. Promotes pluripotency exit of embryonic stem cells (ESCs) by priming ESCs for differentiation. Acts as a key regulator of self-renewal of hematopoietic stem cells (HSCs) by mediating HSCs quiescence and long-term self-renewal. Together with MEOX2, regulates transcription in heart endothelial cells to regulate fatty acid transport across heart endothelial cells. Acts by forming a heterodimer with another helix-loop-helix (bHLH) protein, such as TCF3/E12, that binds DNA on E-box motifs (5'-CANNTG-3') and activates transcription of target genes. The chain is Transcription factor 15 from Mus musculus (Mouse).